The chain runs to 479 residues: Sulfate adenylyltransferase subunit 1 (479 aa).

A tr-type G domain is found at 22 to 238 (KDMLRFLTCG…DSMDISKEPK (217 aa)). The interval 31–38 (GSVDDGKS) is G1. Residue 31-38 (GSVDDGKS) coordinates GTP. The interval 89–93 (GITID) is G2. Residues 110-113 (DTPG) are G3. GTP contacts are provided by residues 110–114 (DTPGH) and 165–168 (NKMD). A G4 region spans residues 165–168 (NKMD). Residues 202–204 (SAL) form a G5 region.

It belongs to the TRAFAC class translation factor GTPase superfamily. Classic translation factor GTPase family. CysN/NodQ subfamily. In terms of assembly, heterodimer composed of CysD, the smaller subunit, and CysN.

It carries out the reaction sulfate + ATP + H(+) = adenosine 5'-phosphosulfate + diphosphate. It participates in sulfur metabolism; hydrogen sulfide biosynthesis; sulfite from sulfate: step 1/3. Functionally, with CysD forms the ATP sulfurylase (ATPS) that catalyzes the adenylation of sulfate producing adenosine 5'-phosphosulfate (APS) and diphosphate, the first enzymatic step in sulfur assimilation pathway. APS synthesis involves the formation of a high-energy phosphoric-sulfuric acid anhydride bond driven by GTP hydrolysis by CysN coupled to ATP hydrolysis by CysD. The polypeptide is Sulfate adenylyltransferase subunit 1 (Sulfurovum sp. (strain NBC37-1)).